We begin with the raw amino-acid sequence, 143 residues long: FAD synthase (143 aa).

ATP is bound by residues 13 to 14, 18 to 21, and aspartate 96; these read TF and HPGH.

This sequence belongs to the archaeal FAD synthase family. As to quaternary structure, homodimer. The cofactor is a divalent metal cation.

The catalysed reaction is FMN + ATP + H(+) = FAD + diphosphate. Its pathway is cofactor biosynthesis; FAD biosynthesis; FAD from FMN: step 1/1. Catalyzes the transfer of the AMP portion of ATP to flavin mononucleotide (FMN) to produce flavin adenine dinucleotide (FAD) coenzyme. In Methanothrix thermoacetophila (strain DSM 6194 / JCM 14653 / NBRC 101360 / PT) (Methanosaeta thermophila), this protein is FAD synthase.